Consider the following 420-residue polypeptide: Hemojuvelin (420 aa).

The first 32 residues, 1-32 (MGQSPSPRSPHGSPPTLSTLTLLLLLCGQAHS), serve as a signal peptide directing secretion. Residue tyrosine 43 is modified to Phosphotyrosine. N-linked (GlcNAc...) asparagine glycosylation is present at asparagine 111. The tract at residues 113-135 (SRQGPTAPPPARGPALPGAGPAP) is disordered. Over residues 125–134 (GPALPGAGPA) the composition is skewed to low complexity. 2 disulfides stabilise this stretch: cysteine 141–cysteine 223 and cysteine 160–cysteine 310. N-linked (GlcNAc...) asparagine glycans are attached at residues asparagine 206 and asparagine 365. A lipid anchor (GPI-anchor amidated aspartate) is attached at aspartate 393. Positions 394–420 (AGPPLSPAICLVPLLSALFVLWLCFSK) are cleaved as a propeptide — removed in mature form.

The protein belongs to the repulsive guidance molecule (RGM) family. Interacts with BMP2 and BMP4. Interacts with BMP6. Interacts with BMPR1B. Interacts with TMPRSS6. Post-translationally, autocatalytically cleaved at low pH; the two chains remain linked via two disulfide bonds. Also proteolytically processed by TMPRSS6, several fragments being released in the extracellular space; regulates HJV activity in BMP signaling and thefore iron homeostasis. Muscle cell lineage.

The protein resides in the cell membrane. Acts as a bone morphogenetic protein (BMP) coreceptor. Through enhancement of BMP signaling regulates hepcidin (HAMP) expression and regulates iron homeostasis. The protein is Hemojuvelin of Mus musculus (Mouse).